The following is a 77-amino-acid chain: Coiled-coil-helix-coiled-coil-helix domain-containing protein C550.01c (77 aa).

Residues 24–65 (KGGCVEEHLRLNDCYWDTHDWRKCTEQMEEFRKCWEKRHGPL) form the CHCH domain. 2 consecutive short sequence motifs (cx9C motif) follow at residues 27-37 (CVEEHLRLNDC) and 47-57 (CTEQMEEFRKC). 2 disulfides stabilise this stretch: cysteine 27–cysteine 57 and cysteine 37–cysteine 47.

The protein resides in the cytoplasm. Its subcellular location is the nucleus. This Schizosaccharomyces pombe (strain 972 / ATCC 24843) (Fission yeast) protein is Coiled-coil-helix-coiled-coil-helix domain-containing protein C550.01c.